The sequence spans 166 residues: Putative transcriptional regulatory protein for hcr operon (166 aa).

The HTH marR-type domain occupies 1–155 (MRKHRGKPAN…LIGLLKRLYR (155 aa)).

In terms of biological role, may be involved in the regulation of genes for 4-hydroxybenzoyl-CoA reductase. This chain is Putative transcriptional regulatory protein for hcr operon, found in Thauera aromatica.